We begin with the raw amino-acid sequence, 405 residues long: Tryptophan synthase beta chain (405 aa).

Residue K98 is modified to N6-(pyridoxal phosphate)lysine.

It belongs to the TrpB family. As to quaternary structure, tetramer of two alpha and two beta chains. Pyridoxal 5'-phosphate is required as a cofactor.

The catalysed reaction is (1S,2R)-1-C-(indol-3-yl)glycerol 3-phosphate + L-serine = D-glyceraldehyde 3-phosphate + L-tryptophan + H2O. It functions in the pathway amino-acid biosynthesis; L-tryptophan biosynthesis; L-tryptophan from chorismate: step 5/5. Its function is as follows. The beta subunit is responsible for the synthesis of L-tryptophan from indole and L-serine. The polypeptide is Tryptophan synthase beta chain (trpB) (Xylella fastidiosa (strain 9a5c)).